The following is a 201-amino-acid chain: Small ribosomal subunit protein uS4c (201 aa).

Residues 17-36 (ALPGLTRKTPKSGSNLKKKF) form a disordered region. The S4 RNA-binding domain maps to 89 to 157 (MRLDNILFRL…VQNYIASSDP (69 aa)).

Belongs to the universal ribosomal protein uS4 family. In terms of assembly, part of the 30S ribosomal subunit. Contacts protein S5. The interaction surface between S4 and S5 is involved in control of translational fidelity.

The protein resides in the plastid. It is found in the chloroplast. In terms of biological role, one of the primary rRNA binding proteins, it binds directly to 16S rRNA where it nucleates assembly of the body of the 30S subunit. With S5 and S12 plays an important role in translational accuracy. The polypeptide is Small ribosomal subunit protein uS4c (rps4) (Agrostis stolonifera (Creeping bentgrass)).